Reading from the N-terminus, the 259-residue chain is Insulin-like growth factor-binding protein 4 (259 aa).

The first 22 residues, 1-22 (MLPLCLVAALLLSASGPRPSLG), serve as a signal peptide directing secretion. The region spanning 24 to 104 (EAIHCPPCSE…MHGQGLCMEL (81 aa)) is the IGFBP N-terminal domain. 6 disulfides stabilise this stretch: C28–C54, C31–C56, C39–C57, C45–C60, C68–C81, and C75–C101. Positions 115–136 (QPSDKDEGDHPNNSFSPCSPQD) are disordered. A glycan (N-linked (GlcNAc...) asparagine) is linked at N126. Intrachain disulfides connect C132-C139, C175-C205, C216-C227, and C229-C250. Positions 172–250 (QGSCQSELHR…GLEPKGELDC (79 aa)) constitute a Thyroglobulin type-1 domain. S256 is subject to Phosphoserine.

In terms of assembly, binds IGF2 more than IGF1.

It is found in the secreted. Its function is as follows. IGF-binding proteins prolong the half-life of the IGFs and have been shown to either inhibit or stimulate the growth promoting effects of the IGFs on cell culture. They alter the interaction of IGFs with their cell surface receptors. This chain is Insulin-like growth factor-binding protein 4 (IGFBP4), found in Sus scrofa (Pig).